A 98-amino-acid chain; its full sequence is NADH-ubiquinone oxidoreductase chain 4L (98 aa).

Helical transmembrane passes span 1-21 (MVLI…GVLI), 36-56 (MMLS…MFSI), and 61-81 (LILL…LVSI).

The protein belongs to the complex I subunit 4L family.

The protein resides in the mitochondrion membrane. It carries out the reaction a ubiquinone + NADH + 5 H(+)(in) = a ubiquinol + NAD(+) + 4 H(+)(out). Functionally, core subunit of the mitochondrial membrane respiratory chain NADH dehydrogenase (Complex I) which catalyzes electron transfer from NADH through the respiratory chain, using ubiquinone as an electron acceptor. Part of the enzyme membrane arm which is embedded in the lipid bilayer and involved in proton translocation. The polypeptide is NADH-ubiquinone oxidoreductase chain 4L (MT-ND4L) (Didelphis virginiana (North American opossum)).